Reading from the N-terminus, the 398-residue chain is Alpha-ketoglutarate-dependent dioxygenase bsc9 (398 aa).

Positions 167 and 169 each coordinate Fe cation. Threonine 212 lines the 2-oxoglutarate pocket. Histidine 365 is a binding site for Fe cation. Residue arginine 377 participates in 2-oxoglutarate binding.

The protein belongs to the TfdA dioxygenase family. It depends on Fe(2+) as a cofactor.

It functions in the pathway mycotoxin biosynthesis. In terms of biological role, alpha-ketoglutarate dependent dioxygenase; part of the gene cluster that mediates the biosynthesis of the diterpene glucoside brassicicene C. In the first step of the brassicicene C biosynthesis, the bifunctional diterpene synthase bsc8 that possesses both prenyl transferase and terpene cyclase activity, converts isopentenyl diphosphate and dimethylallyl diphosphate into geranylgeranyl diphosphate (GGDP) that is further converted into fusicocca-2,10(14)-diene, the first precursor for brassicicene C. Fusicocca-2,10(14)-diene is then substrate of cytochrome P450 monooxygenase bsc1 for hydroxylation at the C-8 position. Oxidation at C-16 position to aldehyde is then catalyzed by the cytochrome P450 monooyxygenase bsc7, yielding fusicocca-2,10(14)-diene-8-beta,16-diol. Follows the isomerization of the double bond and reduction of aldehyde to alcohol catalyzed by the short-chain dehydrogenase/reductase bsc3 to yield the diol compound fusicocca-1,10(14)-diene-8 beta,16-diol. The next step is the oxidation at the C-3 position of fusicocca-2,10(14)-diene-8-beta,16-diol catalyzed by the alpha-ketoglutarate dependent dioxygenase bsc9, to produce a triol compound. Methylation of the hydroxy group at position 16 is performed by the methyltransferase bsc6. 16-O-methylation is followed by oxidation at the C-13 position to ketone and an alkyl shift of the methyl group leads to brassicicene C. Although the probable acetyltransferase bsc4 is included in the gene cluster, no acetylation reactions are necessary for brassicicene C biosynthesis. However, the fact that brassicicene E, which is a structurally related compound having an acetoxy group at position 12, was previously isolated from another strain of A.brassicicola suggests that the ATCC 96836 strain might also produce a small amount of brassicicene E. The sequence is that of Alpha-ketoglutarate-dependent dioxygenase bsc9 from Alternaria brassicicola (Dark leaf spot agent).